The sequence spans 197 residues: MDIEMIEVILLAIALAMDAFAVSIGLGAKSQKQSSAYVLRLAVYAALYFGIAQGVMPLIGYLLGAVLLGWLATAAPWIGGGILIVLGAKMLYEAFNGEIEAVLEDGFDENIRKKINHRMMFTLAIATSIDAMAAGFTLNLLALNAWLACLIIAIVTAGFGFFGIYLGKSSGTWLEDKAEILGGLVLIAIGVKVMLFS.

Transmembrane regions (helical) follow at residues valine 8 to alanine 28, valine 43 to leucine 63, valine 66 to leucine 86, leucine 123 to leucine 143, tryptophan 146 to leucine 166, and lysine 177 to serine 197.

The protein belongs to the MntP (TC 9.B.29) family.

It is found in the cell inner membrane. Functionally, probably functions as a manganese efflux pump. This is Putative manganese efflux pump MntP from Psychrobacter arcticus (strain DSM 17307 / VKM B-2377 / 273-4).